Consider the following 337-residue polypeptide: tRNA N6-adenosine threonylcarbamoyltransferase (337 aa).

Residues His107 and His111 each contribute to the Fe cation site. Substrate-binding positions include 129 to 133 (LISGG), Asp162, Gly175, and Asn271. Position 299 (Asp299) interacts with Fe cation.

This sequence belongs to the KAE1 / TsaD family. Requires Fe(2+) as cofactor.

It is found in the cytoplasm. The catalysed reaction is L-threonylcarbamoyladenylate + adenosine(37) in tRNA = N(6)-L-threonylcarbamoyladenosine(37) in tRNA + AMP + H(+). In terms of biological role, required for the formation of a threonylcarbamoyl group on adenosine at position 37 (t(6)A37) in tRNAs that read codons beginning with adenine. Is involved in the transfer of the threonylcarbamoyl moiety of threonylcarbamoyl-AMP (TC-AMP) to the N6 group of A37, together with TsaE and TsaB. TsaD likely plays a direct catalytic role in this reaction. This is tRNA N6-adenosine threonylcarbamoyltransferase from Sulfurovum sp. (strain NBC37-1).